A 457-amino-acid chain; its full sequence is MRSAAVLALLLCAGQVTALPVNSPMNKGDTEVMKCIVEVISDTLSKPSPMPVSQECFETLRGDERILSILRHQNLLKELQDLALQGAKERAHQQKKHSGFEDELSEVLENQSSQAELKEAVEEPSSKDVMEKREDSKEAEKSGEATDGARPQALPEPMQESKAEGNNQAPGEEEEEEEEATNTHPPASLPSQKYPGPQAEGDSEGLSQGLVDREKGLSAEPGWQAKREEEEEEEEEAEAGEEAVPEEEGPTVVLNPHPSLGYKEIRKGESRSEALAVDGAGKPGAEEAQDPEGKGEQEHSQQKEEEEEMAVVPQGLFRGGKSGELEQEEERLSKEWEDSKRWSKMDQLAKELTAEKRLEGQEEEEDNRDSSMKLSFRARAYGFRGPGPQLRRGWRPSSREDSLEAGLPLQVRGYPEEKKEEEGSANRRPEDQELESLSAIEAELEKVAHQLQALRRG.

The first 18 residues, 1-18 (MRSAAVLALLLCAGQVTA), serve as a signal peptide directing secretion. Residues Cys-35 and Cys-56 are joined by a disulfide bond. The tract at residues 41–59 (SDTLSKPSPMPVSQECFET) is O-glycosylated at one site only in cerebrospinal fluid. The tract at residues 88 to 440 (KERAHQQKKH…DQELESLSAI (353 aa)) is disordered. The span at 116–144 (ELKEAVEEPSSKDVMEKREDSKEAEKSGE) shows a compositional bias: basic and acidic residues. A Phosphoserine modification is found at Ser-142. The segment covering 171-180 (GEEEEEEEEA) has biased composition (acidic residues). O-linked (GalNAc...) threonine glycans are attached at residues Thr-181 and Thr-183. The interval 181–191 (TNTHPPASLPS) is O-glycosylated at one site only in cerebrospinal fluid. The segment covering 182–191 (NTHPPASLPS) has biased composition (polar residues). Tyr-194 is subject to Phosphotyrosine. Phosphoserine is present on residues Ser-203 and Ser-218. The segment covering 229 to 249 (EEEEEEEEAEAGEEAVPEEEG) has biased composition (acidic residues). O-linked (GalNAc...) threonine glycosylation is present at Thr-251. 2 stretches are compositionally biased toward basic and acidic residues: residues 263–272 (KEIRKGESRS) and 291–303 (PEGKGEQEHSQQK). Phosphoserine is present on residues Ser-270 and Ser-300. Glycine amide is present on Gly-319. Phosphoserine is present on residues Ser-322, Ser-333, and Ser-371. Residues 330 to 360 (ERLSKEWEDSKRWSKMDQLAKELTAEKRLEG) show a composition bias toward basic and acidic residues. Met-372 is modified (methionine sulfoxide). Phosphoserine is present on residues Ser-398, Ser-402, Ser-424, and Ser-438. The segment covering 414–431 (YPEEKKEEEGSANRRPED) has biased composition (basic and acidic residues). Ser-424 carries O-linked (Xyl...) (chondroitin sulfate) serine glycosylation. The residue at position 456 (Arg-456) is an Arginine amide.

The protein belongs to the chromogranin/secretogranin protein family. Self-interacts; self-assembly is promoted in vitro by chondroitin sulfate attachment which occurs at mildly acidic pH conditions. Interacts with SCG3. Interacts with ITPR1 in the secretory granules. Sulfated on tyrosine residues and/or contains sulfated glycans. Post-translationally, O-glycosylated with core 1 or possibly core 8 glycans. Contains chondroitin sulfate (CS); CS attachment is pH-dependent, being observed at mildly acidic conditions of pH 5 but not at neutral pH, and promotes self-assembly in vitro. In terms of processing, proteolytic processing gives rise to an additional longer form of catestatin (residues 358-390) which displays a less potent catecholamine release-inhibitory activity. Plasmin-mediated proteolytic processing can give rise to additional shorter and longer forms of catestatin peptides. As to expression, detected in cerebrospinal fluid (at protein level). Detected in urine (at protein level). In terms of tissue distribution, found in the brain.

It is found in the secreted. Its subcellular location is the cytoplasmic vesicle. The protein resides in the secretory vesicle. It localises to the neuronal dense core vesicle. Its function is as follows. Strongly inhibits glucose induced insulin release from the pancreas. Inhibits catecholamine release from chromaffin cells and noradrenergic neurons by acting as a non-competitive nicotinic cholinergic antagonist. Displays antibacterial activity against Gram-positive bacteria S.aureus and M.luteus, and Gram-negative bacteria E.coli and P.aeruginosa. Can induce mast cell migration, degranulation and production of cytokines and chemokines. Acts as a potent scavenger of free radicals in vitro. May play a role in the regulation of cardiac function and blood pressure. Functionally, regulates granule biogenesis in endocrine cells by up-regulating the transcription of protease nexin 1 (SERPINE2) via a cAMP-PKA-SP1 pathway. This leads to inhibition of granule protein degradation in the Golgi complex which in turn promotes granule formation. In Homo sapiens (Human), this protein is Chromogranin-A (CHGA).